The following is a 211-amino-acid chain: Large ribosomal subunit protein uL3 (211 aa).

A disordered region spans residues 125 to 148 (GPASHGSKKWHRRPGSIGQRKTPG).

This sequence belongs to the universal ribosomal protein uL3 family. Part of the 50S ribosomal subunit. Forms a cluster with proteins L14 and L19. Also contacts proteins L13 and L17.

Its function is as follows. One of the primary rRNA binding proteins, it binds directly near the 3'-end of the 23S rRNA, where it nucleates assembly of the 50S subunit. The sequence is that of Large ribosomal subunit protein uL3 (rplC) from Deinococcus radiodurans (strain ATCC 13939 / DSM 20539 / JCM 16871 / CCUG 27074 / LMG 4051 / NBRC 15346 / NCIMB 9279 / VKM B-1422 / R1).